The primary structure comprises 206 residues: High frequency lysogenization protein HflD homolog (206 aa).

It belongs to the HflD family.

Its subcellular location is the cytoplasm. It localises to the cell inner membrane. The chain is High frequency lysogenization protein HflD homolog from Pseudomonas syringae pv. syringae (strain B728a).